A 137-amino-acid polypeptide reads, in one-letter code: Small ribosomal subunit protein uS9 (137 aa).

The segment at 103 to 137 (PPLKAEGYLTRDPRAKERKKYGLHKARKAPQYSKR) is disordered. Residues 118–137 (KERKKYGLHKARKAPQYSKR) show a composition bias toward basic residues.

Belongs to the universal ribosomal protein uS9 family.

This chain is Small ribosomal subunit protein uS9, found in Crocosphaera subtropica (strain ATCC 51142 / BH68) (Cyanothece sp. (strain ATCC 51142)).